The sequence spans 186 residues: Peptidyl-tRNA hydrolase (186 aa).

Tyr13 is a tRNA binding site. The active-site Proton acceptor is the His18. 3 residues coordinate tRNA: Tyr59, Asn61, and Asn107.

It belongs to the PTH family. In terms of assembly, monomer.

The protein resides in the cytoplasm. The catalysed reaction is an N-acyl-L-alpha-aminoacyl-tRNA + H2O = an N-acyl-L-amino acid + a tRNA + H(+). In terms of biological role, hydrolyzes ribosome-free peptidyl-tRNAs (with 1 or more amino acids incorporated), which drop off the ribosome during protein synthesis, or as a result of ribosome stalling. Catalyzes the release of premature peptidyl moieties from peptidyl-tRNA molecules trapped in stalled 50S ribosomal subunits, and thus maintains levels of free tRNAs and 50S ribosomes. In Thermotoga maritima (strain ATCC 43589 / DSM 3109 / JCM 10099 / NBRC 100826 / MSB8), this protein is Peptidyl-tRNA hydrolase.